The following is a 497-amino-acid chain: SPI-2 type 3 secretion system secretin (497 aa).

The first 20 residues, 1–20 (MVVNKRLILILLFILNTAKS), serve as a signal peptide directing secretion.

It belongs to the bacterial secretin family. T3SS SctC subfamily. In terms of assembly, the core secretion machinery of the T3SS is composed of approximately 20 different proteins, including cytoplasmic components, a base, an export apparatus and a needle. This subunit is part of the base, which anchors the injectisome in the bacterial cell envelope. Forms a stable homooligomeric complex.

Its subcellular location is the cell outer membrane. In terms of biological role, component of the type III secretion system (T3SS), also called injectisome, which is used to inject bacterial effector proteins into eukaryotic host cells. Forms a ring-shaped multimeric structure with an apparent central pore in the outer membrane. Required for secretion of some type III-secreted effectors including the SpvB exotoxin. The chain is SPI-2 type 3 secretion system secretin from Salmonella typhimurium (strain 14028s / SGSC 2262).